The primary structure comprises 734 residues: Photosystem I P700 chlorophyll a apoprotein A2 (734 aa).

A run of 8 helical transmembrane segments spans residues 46-69 (IFAS…FHVA), 135-158 (LYTG…LHLQ), 175-199 (LNHH…HVAI), 273-291 (MAHH…GHMY), 330-353 (IHFQ…QHMY), 369-395 (AALY…IFFI), 417-439 (AIIS…LYVH), and 517-535 (FLVH…LILV). [4Fe-4S] cluster contacts are provided by Cys559 and Cys568. Transmembrane regions (helical) follow at residues 575-596 (AFYL…YWHW) and 643-665 (LSVW…MFLI). Residues His654, Met662, and Tyr670 each contribute to the chlorophyll a site. A phylloquinone-binding site is contributed by Trp671. Residues 707-727 (LVGLAHFSVGYIFTYAAFLIA) form a helical membrane-spanning segment.

It belongs to the PsaA/PsaB family. As to quaternary structure, the PsaA/B heterodimer binds the P700 chlorophyll special pair and subsequent electron acceptors. PSI consists of a core antenna complex that captures photons, and an electron transfer chain that converts photonic excitation into a charge separation. The eukaryotic PSI reaction center is composed of at least 11 subunits. P700 is a chlorophyll a/chlorophyll a' dimer, A0 is one or more chlorophyll a, A1 is one or both phylloquinones and FX is a shared 4Fe-4S iron-sulfur center. is required as a cofactor.

It is found in the plastid. It localises to the chloroplast thylakoid membrane. It carries out the reaction reduced [plastocyanin] + hnu + oxidized [2Fe-2S]-[ferredoxin] = oxidized [plastocyanin] + reduced [2Fe-2S]-[ferredoxin]. PsaA and PsaB bind P700, the primary electron donor of photosystem I (PSI), as well as the electron acceptors A0, A1 and FX. PSI is a plastocyanin-ferredoxin oxidoreductase, converting photonic excitation into a charge separation, which transfers an electron from the donor P700 chlorophyll pair to the spectroscopically characterized acceptors A0, A1, FX, FA and FB in turn. Oxidized P700 is reduced on the lumenal side of the thylakoid membrane by plastocyanin. The polypeptide is Photosystem I P700 chlorophyll a apoprotein A2 (Helianthus annuus (Common sunflower)).